A 269-amino-acid polypeptide reads, in one-letter code: 3'(2'),5'-bisphosphate nucleotidase CysQ (269 aa).

5 residues coordinate Mg(2+): E69, D89, L91, D92, and D216. E69 contributes to the substrate binding site. Substrate is bound by residues L91–T94 and D216.

The protein belongs to the inositol monophosphatase superfamily. CysQ family. The cofactor is Mg(2+).

The protein localises to the cell inner membrane. The catalysed reaction is adenosine 3',5'-bisphosphate + H2O = AMP + phosphate. In terms of biological role, converts adenosine-3',5'-bisphosphate (PAP) to AMP. This Aggregatibacter actinomycetemcomitans (Actinobacillus actinomycetemcomitans) protein is 3'(2'),5'-bisphosphate nucleotidase CysQ.